The chain runs to 785 residues: Rho-GTPase-activating protein RGD3 (785 aa).

S2 carries the post-translational modification N-acetylserine. Residues I31–R463 enclose the F-BAR domain. Residues S313 to N340 are disordered. Positions T329–S339 are enriched in basic and acidic residues. Residues I520–E702 form the Rho-GAP domain. A disordered region spans residues T732 to T785. S759 is subject to Phosphoserine. T760, T762, and T763 each carry phosphothreonine.

In terms of processing, phosphorylation at the C-terminus negatively regulates the activity and the polarized localization.

It localises to the cytoplasmic vesicle membrane. It is found in the cell membrane. The protein localises to the bud tip. Its subcellular location is the bud neck. Its function is as follows. GTPase activating protein (GAP) for RHO3 and CDC42 that binds membranes through phosphatidylinositol 4,5-bisphosphate. Plays a key role in cell polarity. Modulates the RHO3 distribution at the plasma membrane and its polarity during growth. This chain is Rho-GTPase-activating protein RGD3, found in Saccharomyces cerevisiae (strain ATCC 204508 / S288c) (Baker's yeast).